Consider the following 208-residue polypeptide: Ypt/Rab-type GTPase YPT7 (208 aa).

Residues 17–23, 33–40, G67, and 126–129 each bind GTP; these read SGVGKTS, YSQQYKAT, and NKID. An Effector region motif is present at residues 37 to 45; it reads YKATIGADF. Residue K147 forms a Glycyl lysine isopeptide (Lys-Gly) (interchain with G-Cter in ubiquitin) linkage. 158–160 contributes to the GTP binding site; sequence SAK. 2 S-geranylgeranyl cysteine lipidation sites follow: C206 and C208. At C208 the chain carries Cysteine methyl ester.

This sequence belongs to the small GTPase superfamily. Rab family. As to quaternary structure, interacts with IVY1. Interacts with YIF1, YIP4 and YIP5. Interacts with the HOPS complex. Interacts with the class C-Vps complex. Interacts with VPS35. Interacts with VPS39. Interacts with the GDP dissociation inhibitor GDI1. Interacts with CCZ1.

It localises to the late endosome. The protein localises to the vacuole membrane. Its activity is regulated as follows. Rab activation is generally mediated by a guanine exchange factor (GEF), while inactivation through hydrolysis of bound GTP is catalyzed by a GTPase activating protein (GAP). YPT7 is activated by GEFs MON1-CCZ1 complex (MC1) and VAM6/VPS39, and inactivated by GAPs GYP7 and GYP1. In terms of biological role, ypt/Rab-type GTPases are key regulators of membrane trafficking and intracellular vesicular transport. They act as molecular switches that convert between GTP-bound and GDP-bound states, and regulate virtually all steps of membrane traffic from the formation of the transport vesicle at the donor membrane to its fusion at the target membrane. In the GDP-bound state, Ypt proteins are predominantly cytosolic, solubilized through the interaction with a GDP dissociation inhibitor (GDI). In the GTP-bound state, the proteins are membrane bound and interact with specific effector proteins that select cargo, promote vesicle movement, or verify the correct site of fusion. Involved in regulation of vesicular protein transport in exo- and endocytosis. Involved in regulation of late endosome to vacuole trafficking and homotypic vacuole fusion, by interacting in its GTP-bound state on the donor membrane with the large multiprotein HOPS/class C-Vps tethering complex on the acceptor membrane. Involved in retromer assembly and cargo export, recognizing the cargo selection complex (CSC). GTP-bound YPT7 recruits CSC to vacuolar membranes via retromer subunit VPS35. Interacts with the HOPS complex subunit VPS39 independent of the HOPS complex at mitochondria-vacuole contact sites (vCLAMPs), providing a physical and metabolic interconnection between the endocytic pathway and mitochondria. The sequence is that of Ypt/Rab-type GTPase YPT7 (YPT7) from Saccharomyces cerevisiae (strain ATCC 204508 / S288c) (Baker's yeast).